The following is a 108-amino-acid chain: UPF0102 protein Tpet_0671 (108 aa).

The protein belongs to the UPF0102 family.

This chain is UPF0102 protein Tpet_0671, found in Thermotoga petrophila (strain ATCC BAA-488 / DSM 13995 / JCM 10881 / RKU-1).